A 579-amino-acid polypeptide reads, in one-letter code: Membrane protein insertase YidC (579 aa).

The helical transmembrane segment at 10–30 threads the bilayer; the sequence is LVIVTILSALILFGWSFVTKH. A disordered region spans residues 35–61; the sequence is PPAPTQQGKNQPKAELTAEESGDKPLK. The next 5 membrane-spanning stretches (helical) occupy residues 330-350, 351-371, 423-443, 478-498, and 523-543; these read FDKA…FYYL, DWLF…VFTI, VNPF…IALY, LLHF…ILGI, and PLIS…YYIF. The span at 560 to 572 shows a compositional bias: basic and acidic residues; sequence STPEERQDRAERK. Positions 560–579 are disordered; sequence STPEERQDRAERKRPSKKKA.

The protein belongs to the OXA1/ALB3/YidC family. Type 1 subfamily. As to quaternary structure, interacts with the Sec translocase complex via SecD. Specifically interacts with transmembrane segments of nascent integral membrane proteins during membrane integration.

The protein resides in the cell inner membrane. Required for the insertion and/or proper folding and/or complex formation of integral membrane proteins into the membrane. Involved in integration of membrane proteins that insert both dependently and independently of the Sec translocase complex, as well as at least some lipoproteins. Aids folding of multispanning membrane proteins. The protein is Membrane protein insertase YidC of Zymomonas mobilis subsp. mobilis (strain ATCC 31821 / ZM4 / CP4).